A 361-amino-acid polypeptide reads, in one-letter code: Zinc transporter ZIP13 (361 aa).

Topologically, residues 1-6 (MPGCPC) are lumenal. A helical transmembrane segment spans residues 7–27 (PGCGMAGQRLLFLTVLALELL). Residues 28-68 (ERAGGSQPALRSLGAAAACRLDNKESESWGALLSGERLDTW) lie on the Cytoplasmic side of the membrane. Residues 69 to 89 (ICSLLGSLMVGLSGVFPLLVI) form a helical membrane-spanning segment. At 90-108 (PLEMGTLLQSEAGAWRLRQ) the chain is on the lumenal side. Residues 109-129 (LLSFALGGLLGNVFLHLLPEA) traverse the membrane as a helical segment. At 130–150 (WAYTCNITPGGEGQSLQRQQQ) the chain is on the cytoplasmic side. A helical transmembrane segment spans residues 151-171 (LGLWVIAGFLTFLALEKMFLN). Residues 172–232 (SKEDPSQAPS…TIDNFTHGLA (61 aa)) are Lumenal-facing. Residues 233–253 (VAASFLVSKKIGLLTTMAILL) form a helical membrane-spanning segment. An XEXPHE-motif motif is present at residues 254–259 (HEIPHE). Residues 254-275 (HEIPHEVGDFAILLRAGFDRWT) are Cytoplasmic-facing. A helical transmembrane segment spans residues 276 to 296 (AAKLQFSTALGGLLGACFAIC). The Lumenal segment spans residues 297 to 306 (TQSPKGVEET). A helical transmembrane segment spans residues 307-327 (VVWILPFTSGGFLYIALVNVL). The Cytoplasmic segment spans residues 328 to 339 (PDLLEEDDPWHS). A helical transmembrane segment spans residues 340 to 360 (LQQVLLLCSGVLVMVLLSLFV). Glutamate 361 is a topological domain (lumenal).

Belongs to the ZIP transporter (TC 2.A.5) family. As to quaternary structure, homodimer. As to expression, highly expressed in some tissues such as bone and eye. Expressed in osteoblasts of tibia and of alveolar bone, in proliferative zone of growth plate, and in odontoblasts on the forming of the dentine of crown in molar tooth. Also expressed fibroblasts in reticular layer of dermis of skin.

It localises to the golgi apparatus membrane. The protein resides in the cytoplasmic vesicle membrane. It is found in the endoplasmic reticulum membrane. The enzyme catalyses Zn(2+)(in) = Zn(2+)(out). Functions as a zinc transporter transporting Zn(2+) from the Golgi apparatus to the cytosol and thus influences the zinc level at least in areas of the cytosol. May regulate beige adipocyte differentiation. The chain is Zinc transporter ZIP13 from Mus musculus (Mouse).